A 189-amino-acid chain; its full sequence is UPF0398 protein LVIS_0849 (189 aa).

Belongs to the UPF0398 family.

The chain is UPF0398 protein LVIS_0849 from Levilactobacillus brevis (strain ATCC 367 / BCRC 12310 / CIP 105137 / JCM 1170 / LMG 11437 / NCIMB 947 / NCTC 947) (Lactobacillus brevis).